The chain runs to 106 residues: MSANNMSDPRRPNKVLRYKPPPSECNPALDDPTPDYMNLLGMIFSMCGLMLKLKWCAWVAVYCSFISFANSRSSEDTKQMMSSFMLSISAVVMSYLQNPQPMTPPW.

The interval 1–29 is disordered; that stretch reads MSANNMSDPRRPNKVLRYKPPPSECNPAL. Ser-2 is modified (N-acetylserine). The Cytoplasmic portion of the chain corresponds to 2–32; that stretch reads SANNMSDPRRPNKVLRYKPPPSECNPALDDP. Residues 33-51 form a helical membrane-spanning segment; sequence TPDYMNLLGMIFSMCGLML. Lys-52 is a topological domain (lumenal). A helical transmembrane segment spans residues 53–70; sequence LKWCAWVAVYCSFISFAN. The Cytoplasmic portion of the chain corresponds to 71 to 74; it reads SRSS. The chain crosses the membrane as a helical span at residues 75-95; it reads EDTKQMMSSFMLSISAVVMSY. At 96–106 the chain is on the lumenal side; it reads LQNPQPMTPPW.

This sequence belongs to the Asterix family. In terms of assembly, component of the PAT complex, composed of WDR83OS/Asterix and CCDC47. The PAT complex is part of the multi-pass translocon (MPT) complex, composed of three subcomplexes, the GEL complex (composed of RAB5IF/OPTI and TMCO1), the BOS complex (composed of NCLN/Nicalin, NOMO1 and TMEM147) and the PAT complex (composed of WDR83OS/Asterix and CCDC47). The MPT complex associates with the SEC61 complex.

The protein localises to the endoplasmic reticulum membrane. In terms of biological role, component of the multi-pass translocon (MPT) complex that mediates insertion of multi-pass membrane proteins into the lipid bilayer of membranes. The MPT complex takes over after the SEC61 complex: following membrane insertion of the first few transmembrane segments of proteins by the SEC61 complex, the MPT complex occludes the lateral gate of the SEC61 complex to promote insertion of subsequent transmembrane regions. Within the MPT complex, the PAT subcomplex sequesters any highly polar regions in the transmembrane domains away from the non-polar membrane environment until they can be buried in the interior of the fully assembled protein. Within the PAT subcomplex, WDR83OS/Asterix binds to and redirects the substrate to a location behind the SEC61 complex. The sequence is that of PAT complex subunit Asterix (WDR83OS) from Bos taurus (Bovine).